The following is a 347-amino-acid chain: MARSINLAVIPGDGIGQEVVAQGLKVLSAALPSDVKLETKEFDFGARRYHATGETLTDADLDALKQHDAILLGAIGDPSVPSGVLERGFLLKLRFAFDHHVNLRPSKLLPGVETPLAGQPEIDFVVVREGTEGPYTGNGGTIRTGTPHAVATEVSLNTAFGIERVVRDAYARAQARPRKKLALVHKNNVLVHAGHLWTDIFNKVGEEFPDVTTEYMHVDAATIYLVTQPERFDVIVTDNLFGDIITDLAAAISGGIGVAASGNINPSGAYPSMFEPVHGSAPDIAGQGKADPSATILSVALLLRHLGYEAEAARIEEAVSADLAERVGKPARSTDEIGDALTVRVAG.

Substrate is bound by residues arginine 94, arginine 104, arginine 128, and aspartate 219. Residues aspartate 219, aspartate 243, and aspartate 247 each coordinate Mg(2+). 279–291 (GSAPDIAGQGKAD) provides a ligand contact to NAD(+).

Belongs to the isocitrate and isopropylmalate dehydrogenases family. LeuB type 2 subfamily. As to quaternary structure, homodimer. Requires Mg(2+) as cofactor. It depends on Mn(2+) as a cofactor.

The protein localises to the cytoplasm. The enzyme catalyses (2R,3S)-3-isopropylmalate + NAD(+) = 4-methyl-2-oxopentanoate + CO2 + NADH. Its pathway is amino-acid biosynthesis; L-leucine biosynthesis; L-leucine from 3-methyl-2-oxobutanoate: step 3/4. In terms of biological role, catalyzes the oxidation of 3-carboxy-2-hydroxy-4-methylpentanoate (3-isopropylmalate) to 3-carboxy-4-methyl-2-oxopentanoate. The product decarboxylates to 4-methyl-2 oxopentanoate. The polypeptide is 3-isopropylmalate dehydrogenase (Streptomyces avermitilis (strain ATCC 31267 / DSM 46492 / JCM 5070 / NBRC 14893 / NCIMB 12804 / NRRL 8165 / MA-4680)).